The following is a 547-amino-acid chain: CAP-Gly domain-containing linker protein 3 (547 aa).

The segment at 1 to 49 (MTKTDPAPMAPPPRGEEEEEEEEDEPVPEAPSPTQERRQKPVVHPSAPA) is disordered. The segment covering 16-27 (EEEEEEEEDEPV) has biased composition (acidic residues). 3 ANK repeats span residues 117 to 158 (TDMT…LRSR), 160 to 191 (TNMNALHYAAYFDVPDLVRVLLKGARPRVVNS), and 197 to 229 (NHGSALHIAASNLCLGAAKCLLEHGANPALRNR). A CAP-Gly 1 domain is found at 314 to 356 (GTTEFASGQWVGVELDEPEGKNDGSVGGVRYFICPPKQGLFAS). Residues 365-413 (DAPPSSVTSTPRTPRMDFSRVTGKGRREHKGKKKSPSSPSLGSLQQREG) are disordered. The span at 367–377 (PPSSVTSTPRT) shows a compositional bias: low complexity. Threonine 374 bears the Phosphothreonine mark. Basic residues predominate over residues 387–399 (GKGRREHKGKKKS). 2 positions are modified to phosphoserine: serine 399 and serine 401. One can recognise a CAP-Gly 2 domain in the interval 436 to 478 (GKTDFAPGYWYGIELDQPTGKHDGSVFGVRYFTCAPRHGVFAP). The segment at 488–547 (STDPPGDSVGAKKVHQVTMTQPKRTFTTVRTPKDIASENSISRLLFCCWFPWMLRAEMQS) is goLD. 2 S-palmitoyl cysteine lipidation sites follow: cysteine 534 and cysteine 535.

In terms of assembly, homodimer. Interacts with AKT1 and AKT2; when AKT1 and AKT2 are phosphorylated and activated, affinity is higher for AKT2. Interacts with ZDHHC13 (via ANK repeats). Interacts with ZDHHC17 (via ANK repeats). Palmitoylation by ZDHHC17 regulates association with the plasma membrane.

Its subcellular location is the cell membrane. The protein resides in the cytoplasm. It is found in the golgi apparatus. The protein localises to the golgi stack. In terms of biological role, functions as a cytoplasmic linker protein. Involved in TGN-endosome dynamics. May modulate the cellular compartmentalization of AKT kinase family and promote its cell membrane localization, thereby playing a role in glucose transport in adipocytes. The protein is CAP-Gly domain-containing linker protein 3 (Clip3) of Mus musculus (Mouse).